A 164-amino-acid chain; its full sequence is Small ribosomal subunit protein uS9 (164 aa).

Belongs to the universal ribosomal protein uS9 family.

The polypeptide is Small ribosomal subunit protein uS9 (Rickettsia bellii (strain OSU 85-389)).